The following is a 112-amino-acid chain: Putative pterin-4-alpha-carbinolamine dehydratase (112 aa).

It belongs to the pterin-4-alpha-carbinolamine dehydratase family.

It catalyses the reaction (4aS,6R)-4a-hydroxy-L-erythro-5,6,7,8-tetrahydrobiopterin = (6R)-L-erythro-6,7-dihydrobiopterin + H2O. This chain is Putative pterin-4-alpha-carbinolamine dehydratase, found in Shewanella halifaxensis (strain HAW-EB4).